We begin with the raw amino-acid sequence, 270 residues long: UPF0354 protein BT9727_4425 (270 aa).

This sequence belongs to the UPF0354 family.

The sequence is that of UPF0354 protein BT9727_4425 from Bacillus thuringiensis subsp. konkukian (strain 97-27).